A 412-amino-acid chain; its full sequence is Imidazolonepropionase (412 aa).

The Fe(3+) site is built by His76 and His78. Positions 76 and 78 each coordinate Zn(2+). 4-imidazolone-5-propanoate contacts are provided by Arg85, Tyr148, and His181. Tyr148 contributes to the N-formimidoyl-L-glutamate binding site. Residue His242 coordinates Fe(3+). A Zn(2+)-binding site is contributed by His242. A 4-imidazolone-5-propanoate-binding site is contributed by Glu245. Asp317 is a Fe(3+) binding site. Residue Asp317 coordinates Zn(2+). Residues Asn319 and Gly321 each coordinate N-formimidoyl-L-glutamate. Ser322 contributes to the 4-imidazolone-5-propanoate binding site.

It belongs to the metallo-dependent hydrolases superfamily. HutI family. Requires Zn(2+) as cofactor. Fe(3+) is required as a cofactor.

It is found in the cytoplasm. It carries out the reaction 4-imidazolone-5-propanoate + H2O = N-formimidoyl-L-glutamate. It participates in amino-acid degradation; L-histidine degradation into L-glutamate; N-formimidoyl-L-glutamate from L-histidine: step 3/3. Its function is as follows. Catalyzes the hydrolytic cleavage of the carbon-nitrogen bond in imidazolone-5-propanoate to yield N-formimidoyl-L-glutamate. It is the third step in the universal histidine degradation pathway. This Staphylococcus saprophyticus subsp. saprophyticus (strain ATCC 15305 / DSM 20229 / NCIMB 8711 / NCTC 7292 / S-41) protein is Imidazolonepropionase.